Here is a 208-residue protein sequence, read N- to C-terminus: MARYTGPSCRLCRRENTELFLKGERCYTDKCAIKRRNYPPGQHGQGRSKTSDYGVQLREKQKVRRIYGILENQFRGYFERADRLKGVTGENLLFLLERRLDNIVYRLGFASSRIEARQLVRHGHFTLNGKKVTIPSIQVKTGDTVELREKSRKVASINESLEAVVRRGIPQWLELDKGAFKGSVKTLPVREDITMPIQEQLIVELYSK.

An S4 RNA-binding domain is found at 98–158 (RRLDNIVYRL…EKSRKVASIN (61 aa)).

Belongs to the universal ribosomal protein uS4 family. In terms of assembly, part of the 30S ribosomal subunit. Contacts protein S5. The interaction surface between S4 and S5 is involved in control of translational fidelity.

Functionally, one of the primary rRNA binding proteins, it binds directly to 16S rRNA where it nucleates assembly of the body of the 30S subunit. With S5 and S12 plays an important role in translational accuracy. The chain is Small ribosomal subunit protein uS4 from Geotalea daltonii (strain DSM 22248 / JCM 15807 / FRC-32) (Geobacter daltonii).